The following is a 502-amino-acid chain: ATP synthase subunit alpha (502 aa).

169-176 (GDRQTGKT) contacts ATP.

It belongs to the ATPase alpha/beta chains family. As to quaternary structure, F-type ATPases have 2 components, CF(1) - the catalytic core - and CF(0) - the membrane proton channel. CF(1) has five subunits: alpha(3), beta(3), gamma(1), delta(1), epsilon(1). CF(0) has three main subunits: a(1), b(2) and c(9-12). The alpha and beta chains form an alternating ring which encloses part of the gamma chain. CF(1) is attached to CF(0) by a central stalk formed by the gamma and epsilon chains, while a peripheral stalk is formed by the delta and b chains.

It localises to the cell membrane. The catalysed reaction is ATP + H2O + 4 H(+)(in) = ADP + phosphate + 5 H(+)(out). Functionally, produces ATP from ADP in the presence of a proton gradient across the membrane. The alpha chain is a regulatory subunit. The chain is ATP synthase subunit alpha from Clostridium perfringens (strain SM101 / Type A).